Here is a 391-residue protein sequence, read N- to C-terminus: Extracellular metalloproteinase 3 (391 aa).

Residues His-1 to Ser-9 constitute a propeptide that is removed on maturation. A glycan (N-linked (GlcNAc...) asparagine) is linked at Asn-173. A Zn(2+)-binding site is contributed by His-192. Residue Glu-193 is part of the active site. His-196 is a Zn(2+) binding site. Residues Asn-243 and Asn-385 are each glycosylated (N-linked (GlcNAc...) asparagine).

It belongs to the peptidase M36 family. Zn(2+) is required as a cofactor.

The protein resides in the secreted. Secreted metalloproteinase probably acting as a virulence factor. In Trichophyton soudanense, this protein is Extracellular metalloproteinase 3 (MEP3).